Reading from the N-terminus, the 468-residue chain is Cyclin-T1.1 (468 aa).

Positions 336-354 (KERGVEEERRKRERDRMAG) are enriched in basic and acidic residues. The disordered stretch occupies residues 336 to 468 (KERGVEEERR…DMDLEDGELE (133 aa)). A compositionally biased stretch (pro residues) spans 387 to 402 (APPPIPPQLNFPPPPI). Residues 458-468 (SDMDLEDGELE) show a composition bias toward acidic residues.

The protein belongs to the cyclin family. Cyclin C subfamily.

Its function is as follows. Regulatory subunit of the cyclin-dependent kinase pair (CDK9/cyclin T) complex, also called positive transcription elongation factor B (P-TEFb), which is proposed to facilitate the transition from abortive to production elongation by phosphorylating the CTD (carboxy-terminal domain) of the large subunit of RNA polymerase II (RNAP II). In Caenorhabditis elegans, this protein is Cyclin-T1.1.